The sequence spans 277 residues: 2-dehydro-3-deoxyphosphooctonate aldolase (277 aa).

Belongs to the KdsA family.

The protein localises to the cytoplasm. It catalyses the reaction D-arabinose 5-phosphate + phosphoenolpyruvate + H2O = 3-deoxy-alpha-D-manno-2-octulosonate-8-phosphate + phosphate. Its pathway is carbohydrate biosynthesis; 3-deoxy-D-manno-octulosonate biosynthesis; 3-deoxy-D-manno-octulosonate from D-ribulose 5-phosphate: step 2/3. It participates in bacterial outer membrane biogenesis; lipopolysaccharide biosynthesis. This is 2-dehydro-3-deoxyphosphooctonate aldolase from Hydrogenovibrio crunogenus (strain DSM 25203 / XCL-2) (Thiomicrospira crunogena).